Reading from the N-terminus, the 92-residue chain is Acylphosphatase (92 aa).

One can recognise an Acylphosphatase-like domain in the interval 5-92 (CIAAYVYGVV…ADFQGFSIRY (88 aa)). Residues Arg20 and Asn38 contribute to the active site.

The protein belongs to the acylphosphatase family.

The catalysed reaction is an acyl phosphate + H2O = a carboxylate + phosphate + H(+). This is Acylphosphatase (acyP) from Serratia proteamaculans (strain 568).